Here is a 790-residue protein sequence, read N- to C-terminus: Mitochondrial intermediate peptidase (790 aa).

The transit peptide at 1–29 (MLKRLARNNSSPWICSRCLQQSQRQRRFN) directs the protein to the mitochondrion. H570 serves as a coordination point for Zn(2+). E571 is a catalytic residue. Zn(2+) contacts are provided by H574 and H577.

It belongs to the peptidase M3 family. Requires Zn(2+) as cofactor.

It is found in the mitochondrion matrix. The catalysed reaction is Release of an N-terminal octapeptide as second stage of processing of some proteins imported into the mitochondrion.. Functionally, cleaves proteins, imported into the mitochondrion, to their mature size. While most mitochondrial precursor proteins are processed to the mature form in one step by mitochondrial processing peptidase (MPP), the sequential cleavage by MIP of an octapeptide after initial processing by MPP is a required step for a subgroup of nuclear-encoded precursor proteins destined for the matrix or the inner membrane. This Phaeosphaeria nodorum (strain SN15 / ATCC MYA-4574 / FGSC 10173) (Glume blotch fungus) protein is Mitochondrial intermediate peptidase (OCT1).